A 705-amino-acid chain; its full sequence is Double-strand break repair protein MRE11 (705 aa).

The Mn(2+) site is built by Asp-15, His-17, Asp-55, and Asn-122. His-123 functions as the Proton donor in the catalytic mechanism. Residues His-220, His-248, and His-250 each contribute to the Mn(2+) site. Over residues 505-514 (RSLRSKEDSR) the composition is skewed to basic and acidic residues. The tract at residues 505–705 (RSLRSKEDSR…TRNYGAVRRR (201 aa)) is disordered. Composition is skewed to polar residues over residues 515–538 (FTSS…LNSF) and 589–605 (SMKQ…SSAA). Basic residues predominate over residues 641–663 (GRKRAAPRGGRGRGRGATAKRGR).

The protein belongs to the MRE11/RAD32 family. As to quaternary structure, component of the MRN complex composed of two heterodimers RAD50/MRE11 associated with a single NBS1. It depends on Mn(2+) as a cofactor.

Its subcellular location is the nucleus. The protein localises to the chromosome. Functionally, core component of the MRN complex, which plays a central role in double-strand break (DSB) repair, DNA recombination, maintenance of telomere integrity and meiosis. The MRN complex is involved in the repair of DNA double-strand breaks (DSBs) via homologous recombination (HR), an error-free mechanism which primarily occurs during S and G2 phases. The complex (1) mediates the end resection of damaged DNA, which generates proper single-stranded DNA, a key initial steps in HR, and is (2) required for the recruitment of other repair factors and efficient activation of ATM and ATR upon DNA damage. Within the MRN complex, MRE11 possesses both single-strand endonuclease activity and double-strand-specific 3'-5' exonuclease activity. MRE11 first endonucleolytically cleaves the 5' strand at DNA DSB ends to prevent non-homologous end joining (NHEJ) and licence HR. It then generates a single-stranded DNA gap via 3' to 5' exonucleolytic degradation, which is required for single-strand invasion and recombination. This chain is Double-strand break repair protein MRE11, found in Oryza sativa subsp. indica (Rice).